Here is a 343-residue protein sequence, read N- to C-terminus: Protein RecA (343 aa).

Residue 66-73 coordinates ATP; sequence GPESSGKT.

The protein belongs to the RecA family.

The protein resides in the cytoplasm. Its function is as follows. Can catalyze the hydrolysis of ATP in the presence of single-stranded DNA, the ATP-dependent uptake of single-stranded DNA by duplex DNA, and the ATP-dependent hybridization of homologous single-stranded DNAs. It interacts with LexA causing its activation and leading to its autocatalytic cleavage. The chain is Protein RecA from Rickettsia bellii (strain OSU 85-389).